The following is a 577-amino-acid chain: Mitochondrial-processing peptidase subunit alpha (577 aa).

The N-terminal 35 residues, 1–35, are a transit peptide targeting the mitochondrion; sequence MLNRFRPARLVAQSSRCLPLTRARAGPLPVNNART. The interval 259-301 is disordered; sequence SDAPGLSRTGSETSVDSLVSESSEASSESSSSSSDSSESSGGL. Over residues 269–301 the composition is skewed to low complexity; that stretch reads SETSVDSLVSESSEASSESSSSSSDSSESSGGL.

This sequence belongs to the peptidase M16 family. Heterodimer of mpp (alpha) and pep (beta) subunits, forming the mitochondrial processing protease (MPP) in which mpp is involved in substrate recognition and binding and pep is the catalytic subunit.

The protein resides in the mitochondrion matrix. Substrate recognition and binding subunit of the essential mitochondrial processing protease (MPP), which cleaves the mitochondrial sequence off newly imported precursors proteins. This chain is Mitochondrial-processing peptidase subunit alpha, found in Neurospora crassa (strain ATCC 24698 / 74-OR23-1A / CBS 708.71 / DSM 1257 / FGSC 987).